A 148-amino-acid chain; its full sequence is Macrodomain Ter protein (148 aa).

Belongs to the MatP family. Homodimer.

It is found in the cytoplasm. Functionally, required for spatial organization of the terminus region of the chromosome (Ter macrodomain) during the cell cycle. Prevents early segregation of duplicated Ter macrodomains during cell division. Binds specifically to matS, which is a 13 bp signature motif repeated within the Ter macrodomain. This Haemophilus influenzae (strain PittGG) protein is Macrodomain Ter protein.